An 83-amino-acid polypeptide reads, in one-letter code: Exodeoxyribonuclease 7 small subunit (83 aa).

The segment at 1 to 25 is disordered; that stretch reads MQDELFETEKAPPKNAKNAPKKSFE.

This sequence belongs to the XseB family. In terms of assembly, heterooligomer composed of large and small subunits.

The protein resides in the cytoplasm. It carries out the reaction Exonucleolytic cleavage in either 5'- to 3'- or 3'- to 5'-direction to yield nucleoside 5'-phosphates.. Bidirectionally degrades single-stranded DNA into large acid-insoluble oligonucleotides, which are then degraded further into small acid-soluble oligonucleotides. This chain is Exodeoxyribonuclease 7 small subunit, found in Helicobacter pylori (strain P12).